Consider the following 468-residue polypeptide: Phosphomethylpyrimidine synthase (468 aa).

Residues Asn-80, Met-109, Tyr-138, His-173, 193–195 (SRG), 234–237 (DGLR), and Glu-273 each bind substrate. His-277 is a Zn(2+) binding site. Tyr-300 provides a ligand contact to substrate. His-341 contributes to the Zn(2+) binding site. Residues Cys-421, Cys-424, and Cys-429 each contribute to the [4Fe-4S] cluster site.

Belongs to the ThiC family. As to quaternary structure, homodimer. Requires [4Fe-4S] cluster as cofactor.

The enzyme catalyses 5-amino-1-(5-phospho-beta-D-ribosyl)imidazole + S-adenosyl-L-methionine = 4-amino-2-methyl-5-(phosphooxymethyl)pyrimidine + CO + 5'-deoxyadenosine + formate + L-methionine + 3 H(+). It functions in the pathway cofactor biosynthesis; thiamine diphosphate biosynthesis. Functionally, catalyzes the synthesis of the hydroxymethylpyrimidine phosphate (HMP-P) moiety of thiamine from aminoimidazole ribotide (AIR) in a radical S-adenosyl-L-methionine (SAM)-dependent reaction. The polypeptide is Phosphomethylpyrimidine synthase (Anaeromyxobacter sp. (strain Fw109-5)).